The primary structure comprises 395 residues: uncharacterized protein (395 aa).

7 helical membrane-spanning segments follow: residues 42–62 (LKYVLVYLLSIINAFLLLIFI), 67–87 (LYSFGISSLTQGFARLVFVLL), 97–117 (LIFNILYWLLYVFINIPLIIF), 128–148 (ILSTHFVVASNVFGFLISIIP), 196–216 (FIYAAIYGFYNGISVSLLYIL), 241–261 (ILFYVNSFILIIAILIGSFVA), and 281–301 (LFFSPNLIATFFSILLTGTVV).

The protein resides in the cell membrane. This is an uncharacterized protein from Mycoplasma genitalium (strain ATCC 33530 / DSM 19775 / NCTC 10195 / G37) (Mycoplasmoides genitalium).